We begin with the raw amino-acid sequence, 374 residues long: Putative L-lysine 2,3-aminomutase aq_1632 (374 aa).

Residues 86-314 (HKYPDTALLL…ARVRYVMSHE (229 aa)) enclose the Radical SAM core domain. [4Fe-4S] cluster is bound by residues C100, C104, and C107. K317 carries the post-translational modification N6-(pyridoxal phosphate)lysine.

It belongs to the radical SAM superfamily. KamA family. The cofactor is [4Fe-4S] cluster. Pyridoxal 5'-phosphate serves as cofactor.

The polypeptide is Putative L-lysine 2,3-aminomutase aq_1632 (Aquifex aeolicus (strain VF5)).